The following is a 156-amino-acid chain: Small ribosomal subunit protein uS7 (156 aa).

Belongs to the universal ribosomal protein uS7 family. As to quaternary structure, part of the 30S ribosomal subunit. Contacts proteins S9 and S11.

One of the primary rRNA binding proteins, it binds directly to 16S rRNA where it nucleates assembly of the head domain of the 30S subunit. Is located at the subunit interface close to the decoding center, probably blocks exit of the E-site tRNA. In Mycobacterium bovis (strain ATCC BAA-935 / AF2122/97), this protein is Small ribosomal subunit protein uS7.